The primary structure comprises 268 residues: NADH-quinone oxidoreductase subunit B 2 (268 aa).

[4Fe-4S] cluster-binding residues include cysteine 42, cysteine 43, cysteine 108, and cysteine 138. Positions 237 to 268 (SPNKAKGVAPEIRHNDLKRPAVEVDHARDEQR) are disordered. A compositionally biased stretch (basic and acidic residues) spans 247–268 (EIRHNDLKRPAVEVDHARDEQR).

The protein belongs to the complex I 20 kDa subunit family. As to quaternary structure, NDH-1 is composed of 14 different subunits. Subunits NuoB, C, D, E, F, and G constitute the peripheral sector of the complex. [4Fe-4S] cluster is required as a cofactor.

The protein resides in the cell membrane. The enzyme catalyses a quinone + NADH + 5 H(+)(in) = a quinol + NAD(+) + 4 H(+)(out). In terms of biological role, NDH-1 shuttles electrons from NADH, via FMN and iron-sulfur (Fe-S) centers, to quinones in the respiratory chain. The immediate electron acceptor for the enzyme in this species is believed to be ubiquinone. Couples the redox reaction to proton translocation (for every two electrons transferred, four hydrogen ions are translocated across the cytoplasmic membrane), and thus conserves the redox energy in a proton gradient. The sequence is that of NADH-quinone oxidoreductase subunit B 2 from Roseiflexus castenholzii (strain DSM 13941 / HLO8).